The primary structure comprises 299 residues: Diaminopimelate epimerase (299 aa).

Substrate is bound by residues asparagine 11 and asparagine 63. Residue cysteine 72 is the Proton donor of the active site. Residues 73–74, asparagine 211, and 229–230 each bind substrate; these read GN and ER. Catalysis depends on cysteine 238, which acts as the Proton acceptor. Position 239–240 (239–240) interacts with substrate; sequence GT.

Belongs to the diaminopimelate epimerase family. In terms of assembly, homodimer.

The protein localises to the cytoplasm. The catalysed reaction is (2S,6S)-2,6-diaminopimelate = meso-2,6-diaminopimelate. It functions in the pathway amino-acid biosynthesis; L-lysine biosynthesis via DAP pathway; DL-2,6-diaminopimelate from LL-2,6-diaminopimelate: step 1/1. In terms of biological role, catalyzes the stereoinversion of LL-2,6-diaminopimelate (L,L-DAP) to meso-diaminopimelate (meso-DAP), a precursor of L-lysine and an essential component of the bacterial peptidoglycan. In Natranaerobius thermophilus (strain ATCC BAA-1301 / DSM 18059 / JW/NM-WN-LF), this protein is Diaminopimelate epimerase.